The sequence spans 343 residues: MEFLLDLHPDAYPLEGFRRRQLLEWVFVQGVGTFDAMTNLPAEARAELARSYHLNPFREIETVRSADGSVKYLFTLTDGRQMEAVYMPYLDRKTICVSTMVGCPARCAFCATGAMGFGRNLTPGEIVAQVLAVAGGEGIGPREIRNLVFMGMGEAMLNYENTMQAARILLHPQALGMSKRRVTLSTVGIAKGIRQLAAEDDLGIKLAISLHAPDEDTRQRIIPTGAANSIAEIMAAARDYQAVTGRRITLEYTMLRGINDHLWQAELLADVLQGLVSHVNLIPMNPWDGSGFESSTEDQIQAFYDTLEARGVDVSVRRSRGKDAGAACGQLALKRPGAVTGAA.

Glu-83 (proton acceptor) is an active-site residue. Residues 89–323 (YLDRKTICVS…VSVRRSRGKD (235 aa)) form the Radical SAM core domain. Cys-96 and Cys-328 form a disulfide bridge. Cys-103, Cys-107, and Cys-110 together coordinate [4Fe-4S] cluster. Residues 153–154 (GE), Ser-185, 209–211 (SLH), and Asn-285 contribute to the S-adenosyl-L-methionine site. Residue Cys-328 is the S-methylcysteine intermediate of the active site.

This sequence belongs to the radical SAM superfamily. RlmN family. It depends on [4Fe-4S] cluster as a cofactor.

The protein resides in the cytoplasm. The catalysed reaction is adenosine(2503) in 23S rRNA + 2 reduced [2Fe-2S]-[ferredoxin] + 2 S-adenosyl-L-methionine = 2-methyladenosine(2503) in 23S rRNA + 5'-deoxyadenosine + L-methionine + 2 oxidized [2Fe-2S]-[ferredoxin] + S-adenosyl-L-homocysteine. The enzyme catalyses adenosine(37) in tRNA + 2 reduced [2Fe-2S]-[ferredoxin] + 2 S-adenosyl-L-methionine = 2-methyladenosine(37) in tRNA + 5'-deoxyadenosine + L-methionine + 2 oxidized [2Fe-2S]-[ferredoxin] + S-adenosyl-L-homocysteine. Functionally, specifically methylates position 2 of adenine 2503 in 23S rRNA and position 2 of adenine 37 in tRNAs. This Deinococcus deserti (strain DSM 17065 / CIP 109153 / LMG 22923 / VCD115) protein is Probable dual-specificity RNA methyltransferase RlmN.